Consider the following 95-residue polypeptide: UPF0358 protein GK1077 (95 aa).

This sequence belongs to the UPF0358 family.

This Geobacillus kaustophilus (strain HTA426) protein is UPF0358 protein GK1077.